The primary structure comprises 432 residues: Glutamate-1-semialdehyde 2,1-aminomutase (432 aa).

Residue K272 is modified to N6-(pyridoxal phosphate)lysine.

It belongs to the class-III pyridoxal-phosphate-dependent aminotransferase family. HemL subfamily. As to quaternary structure, homodimer. Pyridoxal 5'-phosphate serves as cofactor.

The protein resides in the cytoplasm. It catalyses the reaction (S)-4-amino-5-oxopentanoate = 5-aminolevulinate. The protein operates within porphyrin-containing compound metabolism; protoporphyrin-IX biosynthesis; 5-aminolevulinate from L-glutamyl-tRNA(Glu): step 2/2. Its pathway is porphyrin-containing compound metabolism; chlorophyll biosynthesis. The chain is Glutamate-1-semialdehyde 2,1-aminomutase from Acaryochloris marina (strain MBIC 11017).